Reading from the N-terminus, the 2134-residue chain is Tudor domain-containing protein 6 (2134 aa).

The tract at residues 287 to 315 (RAPVGTDDEDSGSATWEEREESPDKPGSP) is disordered. T292 carries the phosphothreonine modification. Tudor domains follow at residues 309–368 (PDKP…YFRM), 542–599 (RPEP…FRQL), 820–879 (YEGD…FFQV), and 1038–1092 (TLAP…AHDV). Residues 1271–1296 (SPMSGTKLDSALPERRMGEPSGRDLP) are disordered. Basic and acidic residues predominate over residues 1282-1296 (LPERRMGEPSGRDLP). 2 Tudor domains span residues 1358-1417 (QWQS…DAVL) and 1570-1630 (CPQI…LLLV). Disordered regions lie at residues 1699 to 1733 (KKYAKTGVPKNDLSSEKRGPERKGSLASPDLGLKK) and 1860 to 1885 (LQHSPAGEEEKEELGLGSPMAPLSPG). The segment covering 1711-1722 (LSSEKRGPERKG) has biased composition (basic and acidic residues). 2 positions are modified to phosphoserine: S1723 and S1726. Position 1925 is a phosphoserine (S1925). A compositionally biased stretch (polar residues) spans 1930–1939 (AVSQDIQGSR). The segment at 1930-1985 (AVSQDIQGSRCSEDERKAGYMGSSDDDHSRSPLLQHGKGGNSPAHDGRNLSEEEFP) is disordered. Residues S1980, S2063, and S2115 each carry the phosphoserine modification.

As to quaternary structure, found in a mRNP complex (i.e. messenger ribonucleoproteins which correspond to mRNA with bound proteins), at least composed of TDRD1, TDRD6, TDRD7 and DDX4. Found in a complex, at least composed of PIWIL1, PIWIL2, DDX4 and TDRD6. Interacts with Tex19.1 and probably Tex19.2. Interacts with PRMT5. Interacts with SNRPB (when methylated); to trigger spliceosome formation. Undergoes proteolytic cleavage near the C-terminal by an unknown protease during the transition from meiosis I to meiosis II in primary spermatocytes. In terms of tissue distribution, testis specific. Expressed in primary spermatocytes at post natal (PN) day 17.5. Expressed in midpachytene stage of primary spermatocytes at PN16 and in round spermatids at PN22 (at protein level).

The protein resides in the cytoplasm. Functionally, tudor domain-containing protein involved in germ cell development, more specifically the formation of chromatoid body (during spermiogenesis), Balbiani body (during oogenesis), germ plasm (upon fertilization), and for proper miRNA expression and spliceosome maturation. Essential for RNA-dependent helicase UPF1 localization to chromatoid body, for UPF1-UPF2 and UPF1-DDX4 interactions which are required for mRNA degradation, using the extended 3' UTR-triggered nonsense-mediated mRNA decay (NMD) pathway. Involved in spliceosome maturation and mRNA splicing in prophase I spermatocytes through interaction with arginine N-methyltransferase PRMT5 and symmetrically arginine dimethylated SNRPB (small nuclear ribonucleoprotein-associated protein). In Mus musculus (Mouse), this protein is Tudor domain-containing protein 6.